A 260-amino-acid chain; its full sequence is Cytochrome c oxidase subunit 3 (260 aa).

The Mitochondrial matrix segment spans residues 1-15; sequence MAHQAHAYHMVDPSP. Residues 16 to 34 traverse the membrane as a helical segment; sequence WPLTGAVAALLLTSGLAMW. Residues 35–40 lie on the Mitochondrial intermembrane side of the membrane; sequence FHFGSM. Residues 41–66 traverse the membrane as a helical segment; sequence ILLTLGLITMVLTMIQWWRDVIREGT. Residues 67 to 72 are Mitochondrial matrix-facing; the sequence is FQGHHT. Residues 73-105 traverse the membrane as a helical segment; it reads PPVQKGLRYGMILFITSEVFFFIGFFWAFYNSS. Over 106–128 the chain is Mitochondrial intermembrane; sequence LAPTYELGECWPPTGITPLNPFE. Residues 129-152 form a helical membrane-spanning segment; sequence VPLLNTAVLLASGVTVTWAHHSIM. The Mitochondrial matrix segment spans residues 153 to 155; the sequence is HGD. A helical transmembrane segment spans residues 156–183; that stretch reads RKEAIQSLTLTILLGLYFTALQAMEYYE. At 184-190 the chain is on the mitochondrial intermembrane side; that stretch reads APFTIAD. Residues 191–223 traverse the membrane as a helical segment; the sequence is GVYGSTFFVATGFHGLHVIIGSLFLSVCLLRQI. Topologically, residues 224–232 are mitochondrial matrix; it reads QYHFTSKHH. The chain crosses the membrane as a helical span at residues 233–255; the sequence is FGFEAAWYWHFVDVVWLFLYVSI. At 256 to 260 the chain is on the mitochondrial intermembrane side; the sequence is YWWGS.

It belongs to the cytochrome c oxidase subunit 3 family. In terms of assembly, component of the cytochrome c oxidase (complex IV, CIV), a multisubunit enzyme composed of 14 subunits. The complex is composed of a catalytic core of 3 subunits MT-CO1, MT-CO2 and MT-CO3, encoded in the mitochondrial DNA, and 11 supernumerary subunits COX4I, COX5A, COX5B, COX6A, COX6B, COX6C, COX7A, COX7B, COX7C, COX8 and NDUFA4, which are encoded in the nuclear genome. The complex exists as a monomer or a dimer and forms supercomplexes (SCs) in the inner mitochondrial membrane with NADH-ubiquinone oxidoreductase (complex I, CI) and ubiquinol-cytochrome c oxidoreductase (cytochrome b-c1 complex, complex III, CIII), resulting in different assemblies (supercomplex SCI(1)III(2)IV(1) and megacomplex MCI(2)III(2)IV(2)).

It is found in the mitochondrion inner membrane. The enzyme catalyses 4 Fe(II)-[cytochrome c] + O2 + 8 H(+)(in) = 4 Fe(III)-[cytochrome c] + 2 H2O + 4 H(+)(out). Its function is as follows. Component of the cytochrome c oxidase, the last enzyme in the mitochondrial electron transport chain which drives oxidative phosphorylation. The respiratory chain contains 3 multisubunit complexes succinate dehydrogenase (complex II, CII), ubiquinol-cytochrome c oxidoreductase (cytochrome b-c1 complex, complex III, CIII) and cytochrome c oxidase (complex IV, CIV), that cooperate to transfer electrons derived from NADH and succinate to molecular oxygen, creating an electrochemical gradient over the inner membrane that drives transmembrane transport and the ATP synthase. Cytochrome c oxidase is the component of the respiratory chain that catalyzes the reduction of oxygen to water. Electrons originating from reduced cytochrome c in the intermembrane space (IMS) are transferred via the dinuclear copper A center (CU(A)) of subunit 2 and heme A of subunit 1 to the active site in subunit 1, a binuclear center (BNC) formed by heme A3 and copper B (CU(B)). The BNC reduces molecular oxygen to 2 water molecules using 4 electrons from cytochrome c in the IMS and 4 protons from the mitochondrial matrix. This chain is Cytochrome c oxidase subunit 3 (mt-co3), found in Xenopus laevis (African clawed frog).